Reading from the N-terminus, the 693-residue chain is ATP-dependent DNA helicase RecG (693 aa).

Residues 48–146 (THLYPIGELL…GDLSTPELQE (99 aa)) are wedge domain. The 166-residue stretch at 283–448 (DMALDVPMMR…AYADLDTSVI (166 aa)) folds into the Helicase ATP-binding domain. Residue 296 to 303 (GDVGSGKT) participates in ATP binding. The short motif at 397–400 (DEQH) is the DEAH box element. Residues 482-628 (EGRQAYWVCT…GFVIAQKDLE (147 aa)) form the Helicase C-terminal domain.

The protein belongs to the helicase family. RecG subfamily. As to quaternary structure, monomer.

It carries out the reaction Couples ATP hydrolysis with the unwinding of duplex DNA by translocating in the 3'-5' direction.. The catalysed reaction is ATP + H2O = ADP + phosphate + H(+). Functionally, plays a critical role in recombination and DNA repair. Helps process Holliday junction intermediates to mature products by catalyzing branch migration. Has replication fork regression activity, unwinds stalled or blocked replication forks to make a HJ that can be resolved. Has a DNA unwinding activity characteristic of a DNA helicase with 3'-5' polarity. In terms of biological role, plays a role in recovery after DNA ADP-ribosylation. This Escherichia coli O127:H6 (strain E2348/69 / EPEC) protein is ATP-dependent DNA helicase RecG.